The primary structure comprises 429 residues: Adenylosuccinate synthetase (429 aa).

GTP-binding positions include 12-18 (GDEGKGK) and 40-42 (GHT). The Proton acceptor role is filled by D13. Residues D13 and G40 each coordinate Mg(2+). IMP contacts are provided by residues 13-16 (DEGK), 38-41 (NAGH), T129, R143, Q223, T238, and R302. H41 (proton donor) is an active-site residue. Substrate is bound at residue 298–304 (VVTGRKR). GTP contacts are provided by residues R304, 330-332 (KLD), and 412-414 (STS).

This sequence belongs to the adenylosuccinate synthetase family. Homodimer. The cofactor is Mg(2+).

It is found in the cytoplasm. It catalyses the reaction IMP + L-aspartate + GTP = N(6)-(1,2-dicarboxyethyl)-AMP + GDP + phosphate + 2 H(+). It functions in the pathway purine metabolism; AMP biosynthesis via de novo pathway; AMP from IMP: step 1/2. Plays an important role in the de novo pathway of purine nucleotide biosynthesis. Catalyzes the first committed step in the biosynthesis of AMP from IMP. The sequence is that of Adenylosuccinate synthetase from Brucella suis (strain ATCC 23445 / NCTC 10510).